Consider the following 274-residue polypeptide: MDWFYAIIYGIVEGITEFLPISSTGHLIVAGNLMGVPWSKEIRDTFEVVIQGGAILAVLAYYWRDFAGQARVIGHDRPTQRLWLGVIVGVIPAVVLGVLFGDVIKAHLFRPSVVAWALIVGGVLMWVIENRKAPPVVHDLKQIGLGRAFLIGAAQCLALLWPGFSRSASSILGGMVMGLDRPTATRFSFYLGIPTLGGAALLDFIKSRHLLAEIGLLNVFLGAAVSFVVAYLAIGWLLRFVSQHNFKGFAVYRVIFGLLILLLVASGRLANGGL.

The next 8 helical transmembrane spans lie at methionine 1–isoleucine 21, valine 48–glycine 68, leucine 84–isoleucine 104, leucine 108–isoleucine 128, isoleucine 143–glycine 163, phenylalanine 187–serine 207, isoleucine 214–isoleucine 234, and valine 254–leucine 274.

The protein belongs to the UppP family.

Its subcellular location is the cell membrane. It catalyses the reaction di-trans,octa-cis-undecaprenyl diphosphate + H2O = di-trans,octa-cis-undecaprenyl phosphate + phosphate + H(+). Its function is as follows. Catalyzes the dephosphorylation of undecaprenyl diphosphate (UPP). Confers resistance to bacitracin. The protein is Undecaprenyl-diphosphatase of Deinococcus geothermalis (strain DSM 11300 / CIP 105573 / AG-3a).